The sequence spans 542 residues: MAKQLIYSDEARKAMKSGVDKLANAVKITLGPKGRYVVLDKKFGAPTITNDGVTIAKEIELEDPFENMGAQLVKEVASKTNDIAGDGTTTATVLAQSLINEGLKNITAGANANHIKKGIEKAVAAAIDEIKKIAKQVKNKGEIAQIASISASDKEIGNLIADAMEKVGKDGVITVEEGKSSETTLDVVEGMQFDRGYSSHYFVTDTERMQAILEDPYIIITDKKISSMQEILPLLEKIIQTGKSFMIIAEDIEGEALATLVLNKIRGTLKVIAVKAPGFGDRRKEMLQDIAILTGGTVITEETGLKLDKATIDLLGQAKRIVVDKENTTIVSGLGDKKEIEARIAQIRKQIEDTKSDYDKEKLQERLAKLVGGVAVVNVGAATEVEMKTKKFKVEDALNATRAGVEEGIVAGGGVALLKTQTVLEKINAADSDEKTGIEIVLKALEGPIRMIIENAGLEASVVVDKVKNSKDTAFGYDADNNEYVDMIKAGIVDPAKVTRTALENAASIASLILTTETLVTDIPEKSPKFPGGGGMPPMPEY.

ATP-binding positions include 29–32 (TLGP), 86–90 (DGTTT), Gly413, and Asp494.

The protein belongs to the chaperonin (HSP60) family. Forms a cylinder of 14 subunits composed of two heptameric rings stacked back-to-back. Interacts with the co-chaperonin GroES.

Its subcellular location is the cytoplasm. The enzyme catalyses ATP + H2O + a folded polypeptide = ADP + phosphate + an unfolded polypeptide.. Its function is as follows. Together with its co-chaperonin GroES, plays an essential role in assisting protein folding. The GroEL-GroES system forms a nano-cage that allows encapsulation of the non-native substrate proteins and provides a physical environment optimized to promote and accelerate protein folding. The polypeptide is Chaperonin GroEL (Endomicrobium trichonymphae).